We begin with the raw amino-acid sequence, 1414 residues long: DNA-directed RNA polymerase subunit beta'' (1414 aa).

The Zn(2+) site is built by Cys-220, Cys-293, Cys-300, and Cys-303.

It belongs to the RNA polymerase beta' chain family. RpoC2 subfamily. In terms of assembly, in plastids the minimal PEP RNA polymerase catalytic core is composed of four subunits: alpha, beta, beta', and beta''. When a (nuclear-encoded) sigma factor is associated with the core the holoenzyme is formed, which can initiate transcription. Zn(2+) is required as a cofactor.

Its subcellular location is the plastid. The protein localises to the chloroplast. It catalyses the reaction RNA(n) + a ribonucleoside 5'-triphosphate = RNA(n+1) + diphosphate. DNA-dependent RNA polymerase catalyzes the transcription of DNA into RNA using the four ribonucleoside triphosphates as substrates. The polypeptide is DNA-directed RNA polymerase subunit beta'' (Angiopteris evecta (Mule's foot fern)).